We begin with the raw amino-acid sequence, 123 residues long: Angiogenin-2 (123 aa).

Residue Gln1 is modified to Pyrrolidone carboxylic acid. The active-site Proton acceptor is His12. 3 disulfide bridges follow: Cys25–Cys80, Cys38–Cys91, and Cys56–Cys106. The Nucleolar localization signal signature appears at 30–34 (ERRNM). Asn33 carries N-linked (GlcNAc...) asparagine glycosylation. Residues Asp40, His82, and His113 each contribute to the Zn(2+) site. Residue His113 is the Proton donor of the active site.

This sequence belongs to the pancreatic ribonuclease family. Serum and milk.

It is found in the cytoplasmic vesicle. The protein resides in the secretory vesicle lumen. It localises to the secreted. The protein localises to the nucleus. Its subcellular location is the nucleolus. Its activity is regulated as follows. Divalent metal ions, such as Cu2+ and Zn2+, may inhibit the ribonucleolytic activity. Its function is as follows. Binds tightly to placental ribonuclease inhibitor and has very low ribonuclease activity. Has potent angiogenic activity. Angiogenin induces vascularization of normal and malignant tissues. Abolishes protein synthesis by specifically hydrolyzing cellular tRNAs. This Bos taurus (Bovine) protein is Angiogenin-2.